We begin with the raw amino-acid sequence, 1434 residues long: Probable ATP-dependent DNA helicase HFM1 (1434 aa).

The Helicase ATP-binding domain occupies 289–476; that stretch reads DDLLYTDRNF…WLSDGERPAV (188 aa). 302–309 lines the ATP pocket; that stretch reads APTGSGKT. Positions 410-413 match the DEAH box motif; that stretch reads DEVH. One can recognise a Helicase C-terminal domain in the interval 514–718; the sequence is KVYSVIRTYS…DVNIALDWIR (205 aa). The SEC63 domain occupies 775 to 1089; that stretch reads PTEAGRLMAW…VGLDIHQKFT (315 aa). Residues 1110–1130 are disordered; the sequence is TDISHSDYSGRATATGSSKGM. The segment at 1141 to 1156 adopts a C4-type zinc-finger fold; that stretch reads CHHHCKNKHACGHDCC. The interval 1294–1333 is disordered; it reads GFGDTRDSSLGGSKLPFQKSSSRFQRDNSNSFASSPGKPD. Polar residues predominate over residues 1311–1327; sequence QKSSSRFQRDNSNSFAS.

It belongs to the helicase family. SKI2 subfamily. Requires Zn(2+) as cofactor.

The enzyme catalyses Couples ATP hydrolysis with the unwinding of duplex DNA by translocating in the 3'-5' direction.. The catalysed reaction is ATP + H2O = ADP + phosphate + H(+). Functionally, required for crossover formation and complete synapsis of homologous chromosomes during meiosis. In Mus musculus (Mouse), this protein is Probable ATP-dependent DNA helicase HFM1.